A 354-amino-acid polypeptide reads, in one-letter code: Uroporphyrinogen decarboxylase (354 aa).

Substrate contacts are provided by residues Arg27–Arg31, Asp77, Tyr154, Thr209, and His327.

Belongs to the uroporphyrinogen decarboxylase family. Homodimer.

The protein localises to the cytoplasm. The catalysed reaction is uroporphyrinogen III + 4 H(+) = coproporphyrinogen III + 4 CO2. Its pathway is porphyrin-containing compound metabolism; protoporphyrin-IX biosynthesis; coproporphyrinogen-III from 5-aminolevulinate: step 4/4. Functionally, catalyzes the decarboxylation of four acetate groups of uroporphyrinogen-III to yield coproporphyrinogen-III. The chain is Uroporphyrinogen decarboxylase from Pseudomonas putida (strain GB-1).